The following is a 256-amino-acid chain: uncharacterized protein (256 aa).

Positions 7-62 constitute an HTH deoR-type domain; sequence PAERQKTLLNLISKQSVISINNLVNILGVSHMTVRRDIQKLEEDGKVISVSGGVQL. The H-T-H motif DNA-binding region spans 24–43; that stretch reads ISINNLVNILGVSHMTVRRD.

This is an uncharacterized protein from Haemophilus influenzae (strain ATCC 51907 / DSM 11121 / KW20 / Rd).